We begin with the raw amino-acid sequence, 977 residues long: Glycine dehydrogenase (decarboxylating) (977 aa).

Position 702 is an N6-(pyridoxal phosphate)lysine (K702).

This sequence belongs to the GcvP family. In terms of assembly, the glycine cleavage system is composed of four proteins: P, T, L and H. Pyridoxal 5'-phosphate is required as a cofactor.

The enzyme catalyses N(6)-[(R)-lipoyl]-L-lysyl-[glycine-cleavage complex H protein] + glycine + H(+) = N(6)-[(R)-S(8)-aminomethyldihydrolipoyl]-L-lysyl-[glycine-cleavage complex H protein] + CO2. Functionally, the glycine cleavage system catalyzes the degradation of glycine. The P protein binds the alpha-amino group of glycine through its pyridoxal phosphate cofactor; CO(2) is released and the remaining methylamine moiety is then transferred to the lipoamide cofactor of the H protein. The sequence is that of Glycine dehydrogenase (decarboxylating) from Xanthomonas axonopodis pv. citri (strain 306).